Consider the following 320-residue polypeptide: o-succinylbenzoate synthase (320 aa).

The active-site Proton donor is K133. Mg(2+)-binding residues include D161, E190, and D213. K235 acts as the Proton acceptor in catalysis.

It belongs to the mandelate racemase/muconate lactonizing enzyme family. MenC type 1 subfamily. A divalent metal cation serves as cofactor.

The catalysed reaction is (1R,6R)-6-hydroxy-2-succinyl-cyclohexa-2,4-diene-1-carboxylate = 2-succinylbenzoate + H2O. It participates in quinol/quinone metabolism; 1,4-dihydroxy-2-naphthoate biosynthesis; 1,4-dihydroxy-2-naphthoate from chorismate: step 4/7. Its pathway is quinol/quinone metabolism; menaquinone biosynthesis. Converts 2-succinyl-6-hydroxy-2,4-cyclohexadiene-1-carboxylate (SHCHC) to 2-succinylbenzoate (OSB). The polypeptide is o-succinylbenzoate synthase (Shigella boydii serotype 4 (strain Sb227)).